Reading from the N-terminus, the 136-residue chain is Regulator of nucleoside diphosphate kinase (136 aa).

Belongs to the Rnk family. As to quaternary structure, interacts with the RNA polymerase.

May act as an anti-Gre factor. The protein is Regulator of nucleoside diphosphate kinase of Escherichia coli O6:H1 (strain CFT073 / ATCC 700928 / UPEC).